The primary structure comprises 166 residues: Small ribosomal subunit protein uS5 (166 aa).

One can recognise an S5 DRBM domain in the interval 11–74 (LQEKLIAVNR…EKARRNMINV (64 aa)).

It belongs to the universal ribosomal protein uS5 family. Part of the 30S ribosomal subunit. Contacts proteins S4 and S8.

Functionally, with S4 and S12 plays an important role in translational accuracy. Located at the back of the 30S subunit body where it stabilizes the conformation of the head with respect to the body. This Haemophilus influenzae (strain 86-028NP) protein is Small ribosomal subunit protein uS5.